Consider the following 512-residue polypeptide: 23S rRNA (uracil(1939)-C(5))-methyltransferase RlmD (512 aa).

Low complexity predominate over residues 1 to 14 (MQPTDSKTSTSDTT). The interval 1–45 (MQPTDSKTSTSDTTEQPNETQTITIPPSKKKSKPSSKTRRRLKDA) is disordered. The span at 15–25 (EQPNETQTITI) shows a compositional bias: polar residues. The segment covering 28–42 (SKKKSKPSSKTRRRL) has biased composition (basic residues). Positions 41 to 113 (RLKDAEPLPF…TSFEEGDAVN (73 aa)) constitute a TRAM domain. 4 residues coordinate [4Fe-4S] cluster: Cys127, Cys133, Cys136, and Cys215. Residues Gln340, Phe369, Asn374, Glu393, Asp420, and Asp441 each contribute to the S-adenosyl-L-methionine site. The active-site Nucleophile is the Cys467.

It belongs to the class I-like SAM-binding methyltransferase superfamily. RNA M5U methyltransferase family. RlmD subfamily.

The catalysed reaction is uridine(1939) in 23S rRNA + S-adenosyl-L-methionine = 5-methyluridine(1939) in 23S rRNA + S-adenosyl-L-homocysteine + H(+). Its function is as follows. Catalyzes the formation of 5-methyl-uridine at position 1939 (m5U1939) in 23S rRNA. This chain is 23S rRNA (uracil(1939)-C(5))-methyltransferase RlmD, found in Psychrobacter arcticus (strain DSM 17307 / VKM B-2377 / 273-4).